The following is a 690-amino-acid chain: Elongation factor G (690 aa).

Positions 8 to 282 constitute a tr-type G domain; that stretch reads KMTRNIGIMA…AVIDYLPSPL (275 aa). Residues 17-24, 81-85, and 135-138 each bind GTP; these read AHIDAGKT, DTPGH, and NKMD.

This sequence belongs to the TRAFAC class translation factor GTPase superfamily. Classic translation factor GTPase family. EF-G/EF-2 subfamily.

The protein localises to the cytoplasm. Its function is as follows. Catalyzes the GTP-dependent ribosomal translocation step during translation elongation. During this step, the ribosome changes from the pre-translocational (PRE) to the post-translocational (POST) state as the newly formed A-site-bound peptidyl-tRNA and P-site-bound deacylated tRNA move to the P and E sites, respectively. Catalyzes the coordinated movement of the two tRNA molecules, the mRNA and conformational changes in the ribosome. The polypeptide is Elongation factor G (Acholeplasma laidlawii (strain PG-8A)).